A 552-amino-acid chain; its full sequence is Steroid transmembrane transporter SLC22A24 (552 aa).

12 helical membrane passes run 16–36, 144–164, 175–197, 201–220, 232–252, 255–275, 349–369, 371–391, 407–427, 435–455, 474–494, and 496–516; these read FQILQIAFFFVTSMITYTHIL, LKSVVQTLFMSGSLLGGLMFG, IYTWCLLQTAIADTCAIFAPTFV, IFRFLAGLTTINIMTNAFIL, IGITLILCSYSIGQMLLGGLA, IRDWYTLHLTVSIPLFVLSLL, IICFLSFIRLGASVPFMGLIL, LQDLGSSIFLFQVLFGAITFI, INQSLFFFLVGLCILVNTFLS, VVLATLGIGTVSAANATFFVH, VFSRMGSVLAPLLMTLVVYSP, and LPWVMYGVFPILAGLIVFCLP.

It belongs to the major facilitator (TC 2.A.1) superfamily. Organic cation transporter (TC 2.A.1.19) family.

It localises to the cell membrane. It carries out the reaction estrone 3-sulfate(out) + glutarate(in) = estrone 3-sulfate(in) + glutarate(out). The catalysed reaction is 17beta-estradiol 17-O-(beta-D-glucuronate)(out) + glutarate(in) = 17beta-estradiol 17-O-(beta-D-glucuronate)(in) + glutarate(out). The enzyme catalyses taurocholate(out) + glutarate(in) = taurocholate(in) + glutarate(out). It catalyses the reaction 5alpha-androstane-3alpha,17beta-diol 3-O-(beta-D-glucuronate)(out) + glutarate(in) = 5alpha-androstane-3alpha,17beta-diol 3-O-(beta-D-glucuronate)(in) + glutarate(out). It carries out the reaction glycocholate(out) + glutarate(in) = glycocholate(in) + glutarate(out). The catalysed reaction is dehydroepiandrosterone 3-sulfate(out) + glutarate(in) = dehydroepiandrosterone 3-sulfate(in) + glutarate(out). The enzyme catalyses glutarate(in) + succinate(out) = glutarate(out) + succinate(in). In terms of biological role, renal transmembrane organic anion/dicarboxylate exchanger that participates in the reabsorption of conjugated steroids, as well as bile acids, driven by an outward gradient of dicarboxylates such as glutarate or succinate. Transports androstanediol glucuronide (5alpha-androstane-3alpha,17beta-diol 3-O-(beta-D-glucuronate)), estrone 3-sulfate, and estradiol-17-glucuronide (17beta-estradiol 17-O-(beta-D-glucuronate)), and taurocholate. This Oryctolagus cuniculus (Rabbit) protein is Steroid transmembrane transporter SLC22A24.